We begin with the raw amino-acid sequence, 378 residues long: Erythronate-4-phosphate dehydrogenase (378 aa).

Residues Ser45 and Thr66 each coordinate substrate. NAD(+)-binding residues include Asp146 and Thr175. The active site involves Arg208. Asp232 is a binding site for NAD(+). Glu237 is a catalytic residue. Catalysis depends on His254, which acts as the Proton donor. Gly257 lines the NAD(+) pocket. A substrate-binding site is contributed by Tyr258.

Belongs to the D-isomer specific 2-hydroxyacid dehydrogenase family. PdxB subfamily. Homodimer.

Its subcellular location is the cytoplasm. It catalyses the reaction 4-phospho-D-erythronate + NAD(+) = (R)-3-hydroxy-2-oxo-4-phosphooxybutanoate + NADH + H(+). It participates in cofactor biosynthesis; pyridoxine 5'-phosphate biosynthesis; pyridoxine 5'-phosphate from D-erythrose 4-phosphate: step 2/5. In terms of biological role, catalyzes the oxidation of erythronate-4-phosphate to 3-hydroxy-2-oxo-4-phosphonooxybutanoate. This is Erythronate-4-phosphate dehydrogenase from Escherichia coli (strain K12 / MC4100 / BW2952).